A 290-amino-acid polypeptide reads, in one-letter code: OTU domain-containing protein 6A (290 aa).

Positions 27–117 (QTLKASVPKN…RRHQERMPAA (91 aa)) are disordered. Positions 49 to 68 (SRLEAEMEQRHKQELEKFGE) are enriched in basic and acidic residues. Residues 95–108 (KAQKRRDRRAHQER) show a composition bias toward basic residues. Residues 142 to 276 (LEMKTIPADG…GEHYNSVKPI (135 aa)) enclose the OTU domain. Residues 147–153 (IPADGHC) form a cys-loop region. Residue Asp150 is part of the active site. Cys153 (nucleophile) is an active-site residue. Residues 211–221 (IVHNASWGGQL) are variable-loop. The his-loop stretch occupies residues 259 to 269 (YLHYACDFGEH). His269 is an active-site residue.

The enzyme catalyses Thiol-dependent hydrolysis of ester, thioester, amide, peptide and isopeptide bonds formed by the C-terminal Gly of ubiquitin (a 76-residue protein attached to proteins as an intracellular targeting signal).. Its function is as follows. Deubiquitinating enzyme that hydrolyzes 'Lys-27'-, 'Lys-29'- and 'Lys-33'-linked polyubiquitin chains. Also able to hydrolyze 'Lys-11'-linked ubiquitin chains. This chain is OTU domain-containing protein 6A (Otud6a), found in Mus musculus (Mouse).